The following is a 171-amino-acid chain: MDRAQKAELVADLKSTFEGTSVVIVTRNLGLTVAQSTALRTKMREAGASYKVSKNKLARIALEGTTYQAINDLLVGPTALATSADPVAPAKVIVDFAKTNDKLEIVGGAMGETVLDVAGVKALAELPSLDELRAKIVGLIQAPATKVVQIVQAPAGQLARVFGAYAAKEDA.

It belongs to the universal ribosomal protein uL10 family. Part of the ribosomal stalk of the 50S ribosomal subunit. The N-terminus interacts with L11 and the large rRNA to form the base of the stalk. The C-terminus forms an elongated spine to which L12 dimers bind in a sequential fashion forming a multimeric L10(L12)X complex.

Functionally, forms part of the ribosomal stalk, playing a central role in the interaction of the ribosome with GTP-bound translation factors. In Rhizorhabdus wittichii (strain DSM 6014 / CCUG 31198 / JCM 15750 / NBRC 105917 / EY 4224 / RW1) (Sphingomonas wittichii), this protein is Large ribosomal subunit protein uL10.